We begin with the raw amino-acid sequence, 249 residues long: Uroplakin-3b-like protein 1 (249 aa).

The signal sequence occupies residues 1-26 (MGPHGKQSVLRMPLLLLLTCVQSGTG). Over 27–194 (LESINYAPQL…PGSQGKGTVV (168 aa)) the chain is Extracellular. 3 N-linked (GlcNAc...) asparagine glycosylation sites follow: Asn-63, Asn-82, and Asn-133. The chain crosses the membrane as a helical span at residues 195 to 215 (IIAFLSILLAILLVVFLVLVI). Topologically, residues 216 to 249 (SACLSTSGSSPEEQVRMRHYHTHHMGSLRAERSS) are cytoplasmic.

It belongs to the uroplakin-3 family.

The protein resides in the membrane. This is Uroplakin-3b-like protein 1 from Mus musculus (Mouse).